A 1100-amino-acid chain; its full sequence is Beta-alanine-activating enzyme (1100 aa).

The disordered stretch occupies residues 162 to 181 (HKVTDREDRVSAESRTPEKE). Residues 197-205 (TSGTTGTPK), Asp-427, Arg-441, and Lys-526 each bind ATP. In terms of domain architecture, Carrier spans 552–632 (EELWGKLQYL…DVYNHIVQAV (81 aa)). An O-(pantetheine 4'-phosphoryl)serine modification is found at Ser-591. Residues 643–671 (SYTTKRKFSDADPEEASGKPARLESAWPS) form a disordered region. At Ser-651 the chain carries Phosphoserine.

The protein belongs to the ATP-dependent AMP-binding enzyme family.

Functionally, covalently binds beta-alanine in an ATP-dependent manner to form a thioester bond with its phosphopantetheine group and transfers it to an as yet unknown acceptor via an amide bond. May be required for a post-translational protein modification or for post-transcriptional modification of an RNA. In Mus musculus (Mouse), this protein is Beta-alanine-activating enzyme (Aasdh).